Consider the following 559-residue polypeptide: MYLNITGMTCDSCATHVKDALEKVPGVLSALVSYPKGSAQLATDPGTSPEALTAAVAGLGYKATPADAPSTSARGRLLGKALGWLGGGDKAGGDGDGLHVAVIGSGAAMAAALKAVEQGANVTLIERGTIGGTCVNVGCVPSKIMIRAAHIAHLRRESPFDGGIAATVPAIDRSKLLAQQQARVDELRHAKYEGILDDNPAITVLHGEARFKDDQSLAVRLNDGGERVVAFDRCLVATGASPAVPPIPGLKESPYWTSTEALVSDTIPERLAVIGSSVVALELAQAFARLGSKVTILARSTLFFREDPAIGEAVTAAFRAEGIKVLEYTQASQVAHVDGEFVLTTGYGEIRADQLLVATGRAPNTRSLALEAAGVAANAQGAIVIDKGMRTSTPHIYAAGDCTDQPQFVYVAAAAGTRAAINMTGGDAALDLTAMPAVVFTDPQVATVGYSEAEAHHDGIETDSRTLTLDNVPRALANFDTRGFIKLVIEEGSGRLIGVQAVAPEAGELIQTAVLAIRNRMTVQELADQLFPYLTMVEGLKLAAQTFSKDVKQLSCCAG.

The HMA domain occupies 1–64 (MYLNITGMTC…AVAGLGYKAT (64 aa)). A metal cation-binding residues include Cys10 and Cys13. Residues Ala108, Gly128, and Thr133 each coordinate FAD. A disulfide bridge links Cys134 with Cys139. FAD contacts are provided by Lys143, Ala209, Asp401, and Val409. Hg(2+) contacts are provided by Cys556 and Cys557.

It belongs to the class-I pyridine nucleotide-disulfide oxidoreductase family. In terms of assembly, homodimer. FAD serves as cofactor.

It carries out the reaction Hg + NADP(+) + H(+) = Hg(2+) + NADPH. Its function is as follows. Resistance to Hg(2+) in bacteria appears to be governed by a specialized system which includes mercuric reductase. MerA protein is responsible for volatilizing mercury as Hg(0). The chain is Mercuric reductase (merA) from Alcaligenes sp.